The following is a 269-amino-acid chain: MKRYQNLKVGEAFSKNRIYPFACNELSSILNLAYSLSPKNVKALIFQDTLSAFRLLPDINTSAAVSAANLLLKSVEAVLPKQKKNLAIVEFKQAKVALKRRSKNREEEDIDIPSLPQDILIHIFSFLEISSLVSSAQVSRSWNQATHENSLWQSQFDLHFNHKVLIRMQSDIDWREAFKKAYIAANSSEALRSGRGYCSYCDSIVWHENLRCLNKQCRLKSGNKPLDLITTHQVVNYLLGIESSDDESESDDEAFPGRLWKLSYVPDYL.

The F-box domain maps to 109–155; the sequence is DIDIPSLPQDILIHIFSFLEISSLVSSAQVSRSWNQATHENSLWQSQ.

The chain is F-box protein At5g52880 from Arabidopsis thaliana (Mouse-ear cress).